The sequence spans 464 residues: Tyrosine aminotransferase (464 aa).

The residue at position 284 (Lys284) is an N6-(pyridoxal phosphate)lysine.

This sequence belongs to the class-I pyridoxal-phosphate-dependent aminotransferase family. Homodimer. Pyridoxal 5'-phosphate serves as cofactor. In terms of tissue distribution, expressed in the muscle. Expressed in the hypodermis and intestine.

The catalysed reaction is L-tyrosine + 2-oxoglutarate = 3-(4-hydroxyphenyl)pyruvate + L-glutamate. It catalyses the reaction 3-hydroxy-L-phenylalanine + 2-oxoglutarate = 3-(3-hydroxyphenyl)pyruvate + L-glutamate. Its pathway is amino-acid degradation; L-phenylalanine degradation; acetoacetate and fumarate from L-phenylalanine: step 2/6. Functionally, transaminase involved in tyrosine breakdown. Converts tyrosine to p-hydroxyphenylpyruvate. Has no transaminase activity towards phenylalanine. Plays protective role against oxidative stress, metabolizing meta-tyrosine and negatively regulating its accumulation. Plays a role in modulating the daf-2/insulin receptor-like transduction pathway through regulating tyrosine levels. Negatively regulates dauer formation. Plays a role in longevity. This chain is Tyrosine aminotransferase, found in Caenorhabditis elegans.